Reading from the N-terminus, the 480-residue chain is UDP-glucose 6-dehydrogenase 4 (480 aa).

Residues 8–13 (GAGYVG), aspartate 33, arginine 38, 86–90 (VNTPT), 127–128 (ST), and glutamate 161 contribute to the NAD(+) site. Residues 157–161 (EFLAE), 216–223 (KLAANAFL), and 256–269 (RIGP…VGFG) each bind substrate. The Nucleophile role is filled by cysteine 272. 272 to 275 (CFQK) contacts NAD(+). 334–335 (FK) contributes to the substrate binding site. Arginine 342 provides a ligand contact to NAD(+). The residue at position 393 (serine 393) is a Phosphoserine. Arginine 447 contacts substrate.

The protein belongs to the UDP-glucose/GDP-mannose dehydrogenase family.

The catalysed reaction is UDP-alpha-D-glucose + 2 NAD(+) + H2O = UDP-alpha-D-glucuronate + 2 NADH + 3 H(+). Its pathway is nucleotide-sugar biosynthesis; UDP-alpha-D-glucuronate biosynthesis; UDP-alpha-D-glucuronate from UDP-alpha-D-glucose: step 1/1. Involved in the biosynthesis of UDP-glucuronic acid (UDP-GlcA), providing nucleotide sugars for cell-wall polymers. In Oryza sativa subsp. japonica (Rice), this protein is UDP-glucose 6-dehydrogenase 4 (UGD4).